Consider the following 456-residue polypeptide: Adenylosuccinate lyase (456 aa).

N(6)-(1,2-dicarboxyethyl)-AMP-binding positions include 15-16 (RY), 90-92 (NHD), and 122-123 (TS). H171 acts as the Proton donor/acceptor in catalysis. N(6)-(1,2-dicarboxyethyl)-AMP is bound at residue Q247. The active-site Proton donor/acceptor is S295. N(6)-(1,2-dicarboxyethyl)-AMP is bound by residues S296, 301–303 (KVN), N309, R335, and 340–344 (STVLR).

This sequence belongs to the lyase 1 family. Adenylosuccinate lyase subfamily. Homotetramer. Residues from neighboring subunits contribute catalytic and substrate-binding residues to each active site.

The enzyme catalyses N(6)-(1,2-dicarboxyethyl)-AMP = fumarate + AMP. It carries out the reaction (2S)-2-[5-amino-1-(5-phospho-beta-D-ribosyl)imidazole-4-carboxamido]succinate = 5-amino-1-(5-phospho-beta-D-ribosyl)imidazole-4-carboxamide + fumarate. It functions in the pathway purine metabolism; AMP biosynthesis via de novo pathway; AMP from IMP: step 2/2. It participates in purine metabolism; IMP biosynthesis via de novo pathway; 5-amino-1-(5-phospho-D-ribosyl)imidazole-4-carboxamide from 5-amino-1-(5-phospho-D-ribosyl)imidazole-4-carboxylate: step 2/2. Its function is as follows. Catalyzes two reactions in de novo purine nucleotide biosynthesis. Catalyzes the breakdown of 5-aminoimidazole- (N-succinylocarboxamide) ribotide (SAICAR or 2-[5-amino-1-(5-phospho-beta-D-ribosyl)imidazole-4-carboxamido]succinate) to 5-aminoimidazole-4-carboxamide ribotide (AICAR or 5-amino-1-(5-phospho-beta-D-ribosyl)imidazole-4-carboxamide) and fumarate, and of adenylosuccinate (ADS or N(6)-(1,2-dicarboxyethyl)-AMP) to adenosine monophosphate (AMP) and fumarate. This chain is Adenylosuccinate lyase (purB), found in Legionella pneumophila (strain Corby).